The sequence spans 370 residues: Ubiquinone biosynthesis O-methyltransferase, mitochondrial (370 aa).

The transit peptide at 1-86 (MWGGSKLSSS…SYRLPWTRPY (86 aa)) directs the protein to the mitochondrion. S-adenosyl-L-methionine is bound at residue Arg-125. N6-acetyllysine is present on residues Lys-144 and Lys-150. 2 residues coordinate S-adenosyl-L-methionine: Gly-155 and Asp-176. Lys-197 carries the post-translational modification N6-acetyllysine. Position 223 (Ser-223) interacts with S-adenosyl-L-methionine. 3 residues coordinate Mg(2+): Glu-224, Glu-227, and His-228.

The protein belongs to the class I-like SAM-binding methyltransferase superfamily. UbiG/COQ3 family. Component of a multi-subunit COQ enzyme complex, composed of at least COQ3, COQ4, COQ5, COQ6, COQ7 and COQ9. Mg(2+) serves as cofactor.

It is found in the mitochondrion inner membrane. The enzyme catalyses 3,4-dihydroxy-5-(all-trans-decaprenyl)benzoate + S-adenosyl-L-methionine = 4-hydroxy-3-methoxy-5-(all-trans-decaprenyl)benzoate + S-adenosyl-L-homocysteine + H(+). The catalysed reaction is a 3-demethylubiquinone + S-adenosyl-L-methionine = a ubiquinone + S-adenosyl-L-homocysteine. It carries out the reaction 3-demethylubiquinol-10 + S-adenosyl-L-methionine = ubiquinol-10 + S-adenosyl-L-homocysteine + H(+). It functions in the pathway cofactor biosynthesis; ubiquinone biosynthesis. O-methyltransferase required for two non-consecutive steps during ubiquinone biosynthesis. Catalyzes the 2 O-methylation of 3,4-dihydroxy-5-(all-trans-decaprenyl)benzoic acid into 4-hydroxy-3-methoxy-5-(all-trans-decaprenyl)benzoic acid. Also catalyzes the last step of ubiquinone biosynthesis by mediating methylation of 3-demethylubiquinone into ubiquinone. Also able to mediate the methylation of 3-demethylubiquinol-10 into ubiquinol-10. The chain is Ubiquinone biosynthesis O-methyltransferase, mitochondrial from Bos taurus (Bovine).